The following is a 401-amino-acid chain: Protein zntC (401 aa).

A run of 3 helical transmembrane segments spans residues 33–53, 61–81, and 114–134; these read GGLI…PWFL, LVSV…GAGF, and ITIV…SGGL. Residues 141–247 are disordered; it reads NHMDLSQHNH…SHKDEKDSEK (107 aa). Residues 167-184 are compositionally biased toward acidic residues; it reads GDDDDDDVNEDQEEDSTK. The span at 200–209 shows a compositional bias: low complexity; the sequence is HNSSNSSSNG. Residues 212 to 225 are compositionally biased toward basic residues; it reads HGLKKKKKSKKEHG. Basic and acidic residues predominate over residues 226–247; it reads HGHNHDHSSNGHSHKDEKDSEK. The next 5 helical transmembrane spans lie at 256-276, 285-305, 316-336, 351-371, and 381-401; these read AWVF…GLGS, GLLI…GIAI, CIAL…GMAI, GIIL…ELLP, and KLKL…ALWV.

Belongs to the ZIP transporter (TC 2.A.5) family.

Its subcellular location is the membrane. May transport divalent cations. May participate, with dstA, in the regulation of the differentiation of stalk cells during development. The protein is Protein zntC (zntC) of Dictyostelium discoideum (Social amoeba).